Here is a 236-residue protein sequence, read N- to C-terminus: Small ribosomal subunit protein uS3 (236 aa).

Positions Ile-39–Arg-107 constitute a KH type-2 domain. A disordered region spans residues Ala-214–Ala-236.

It belongs to the universal ribosomal protein uS3 family. As to quaternary structure, part of the 30S ribosomal subunit. Forms a tight complex with proteins S10 and S14.

In terms of biological role, binds the lower part of the 30S subunit head. Binds mRNA in the 70S ribosome, positioning it for translation. The sequence is that of Small ribosomal subunit protein uS3 from Brucella suis (strain ATCC 23445 / NCTC 10510).